The sequence spans 278 residues: 4-deoxy-L-threo-5-hexosulose-uronate ketol-isomerase (278 aa).

Residues H196, H198, E203, and H245 each coordinate Zn(2+).

Belongs to the KduI family. Homohexamer. Zn(2+) is required as a cofactor.

The catalysed reaction is 5-dehydro-4-deoxy-D-glucuronate = 3-deoxy-D-glycero-2,5-hexodiulosonate. It participates in glycan metabolism; pectin degradation; 2-dehydro-3-deoxy-D-gluconate from pectin: step 4/5. Its function is as follows. Catalyzes the isomerization of 5-dehydro-4-deoxy-D-glucuronate to 3-deoxy-D-glycero-2,5-hexodiulosonate. This is 4-deoxy-L-threo-5-hexosulose-uronate ketol-isomerase from Escherichia coli (strain K12 / MC4100 / BW2952).